Reading from the N-terminus, the 158-residue chain is 6,7-dimethyl-8-ribityllumazine synthase 2 (158 aa).

5-amino-6-(D-ribitylamino)uracil contacts are provided by residues tryptophan 20, 54 to 56, and 78 to 80; these read AYE and FVI. The Proton donor role is filled by arginine 86. Serine 111 is a binding site for 5-amino-6-(D-ribitylamino)uracil. Histidine 125 contacts (2S)-2-hydroxy-3-oxobutyl phosphate.

Belongs to the DMRL synthase family. Homodecamer, arranged as a dimer of pentamers.

The protein resides in the cytoplasm. The catalysed reaction is (2S)-2-hydroxy-3-oxobutyl phosphate + 5-amino-6-(D-ribitylamino)uracil = 6,7-dimethyl-8-(1-D-ribityl)lumazine + phosphate + 2 H2O + H(+). It participates in cofactor biosynthesis; riboflavin biosynthesis; riboflavin from 2-hydroxy-3-oxobutyl phosphate and 5-amino-6-(D-ribitylamino)uracil: step 1/2. Its function is as follows. Catalyzes the formation of 6,7-dimethyl-8-ribityllumazine by condensation of 5-amino-6-(D-ribitylamino)uracil with 3,4-dihydroxy-2-butanone 4-phosphate. This is the penultimate step in the biosynthesis of riboflavin. The isozyme RibH2 but not RibH1 is essential for Brucella intracellular survival and replication inside macrophages or in mice. Displays low catalytic activity in comparison with the isozyme RibH1. Is a highly immunogenic protein. Activates dendritic cells (DCs) in vitro, increasing the levels of costimulatory molecules and the secretion of pro-inflammatory cytokines, and recruits DCs, B cells and CD8+ T cells in vivo, both effects in a TLR4-dependent manner. Induces the cross presentation of covalently attached peptides and generates a strong and long-lasting humoral immune response without adjuvants; TLR4 signaling is necessary for the induction of the cytotoxic response but not for antigen cross presentation. Elicits a TLR4-mediated protective response against B16 melanoma in mice, slowing tumor growth and prolonging mice survival. In Brucella abortus (strain 2308), this protein is 6,7-dimethyl-8-ribityllumazine synthase 2.